Consider the following 579-residue polypeptide: Carboxysome shell carbonic anhydrase (579 aa).

Residues 72-95 (GGGRVRSARDQRQPGWVRRDKGAT) form a disordered region. Positions 78 to 93 (SARDQRQPGWVRRDKG) are enriched in basic and acidic residues. A Zn(2+)-binding site is contributed by Cys240. Asp242 serves as the catalytic Proton acceptor. 2 residues coordinate Zn(2+): His308 and Cys319.

The protein belongs to the beta-class carbonic anhydrase family. CsoSCA subfamily. In terms of assembly, homodimer. The cofactor is Zn(2+).

It is found in the carboxysome. The catalysed reaction is hydrogencarbonate + H(+) = CO2 + H2O. With respect to regulation, inhibited by dithiothreitol, partially inhibited by acetatzolamide and cyanide. Reversible hydration of carbon dioxide. Essential for photosynthetic carbon dioxide fixation, supplies CO(2) to RuBisCO (ribulose bisphosphate carboxylase, cbbL-cbbS) in the carboxysome. The sequence is that of Carboxysome shell carbonic anhydrase from Parasynechococcus marenigrum (strain WH8102).